We begin with the raw amino-acid sequence, 478 residues long: Protein WVD2-like 7 (478 aa).

Disordered stretches follow at residues 201–326 (DSAL…TGST) and 385–420 (PMPSFYNIGTRPVSHNKTEPSKVAQSRSRPATSASI). A compositionally biased stretch (basic and acidic residues) spans 208–217 (AGSKLDEHAS). Polar residues-rich tracts occupy residues 219-232 (KPSNSMETPSSSVN) and 264-277 (GSSLSSNSKTNVDA). A compositionally biased stretch (basic and acidic residues) spans 278 to 289 (KSQKELRPKKTI). 2 stretches are compositionally biased toward polar residues: residues 309–326 (RCKTSTTSSKLEMSTGST) and 407–420 (VAQSRSRPATSASI).

This sequence belongs to the TPX2 family. As to expression, expressed in seedlings.

It localises to the cytoplasm. The protein localises to the cytoskeleton. Functionally, microtubule-associated protein (MAP) that regulates the orientation of interphase cortical microtubules. The polypeptide is Protein WVD2-like 7 (Arabidopsis thaliana (Mouse-ear cress)).